The chain runs to 142 residues: DNA-directed RNA polymerase II subunit RPB4 (142 aa).

The protein belongs to the eukaryotic RPB4 RNA polymerase subunit family. Component of the RNA polymerase II (Pol II) core complex consisting of 12 subunits: a ten-subunit catalytic core composed of POLR2A/RPB1, POLR2B/RPB2, POLR2C/RPB3, POLR2I/RPB9, POLR2J/RPB11, POLR2E/RPABC1, POLR2F/RPABC2, POLR2H/RPABC3, POLR2K/RPABC4 and POLR2L/RPABC5 and a mobile stalk composed of two subunits POLR2D/RPB4 and POLR2G/RPB7, protruding from the core and functioning primarily in transcription initiation. Part of Pol II(G) complex, in which Pol II core associates with an additional subunit POLR2M; unlike conventional Pol II, Pol II(G) functions as a transcriptional repressor. Part of TBP-based Pol II pre-initiation complex (PIC), in which Pol II core assembles with general transcription factors and other specific initiation factors including GTF2E1, GTF2E2, GTF2F1, GTF2F2, TCEA1, ERCC2, ERCC3, GTF2H2, GTF2H3, GTF2H4, GTF2H5, GTF2A1, GTF2A2, GTF2B and TBP; this large multi-subunit PIC complex mediates DNA unwinding and targets Pol II core to the transcription start site where the first phosphodiester bond forms.

Its subcellular location is the nucleus. Core component of RNA polymerase II (Pol II), a DNA-dependent RNA polymerase which synthesizes mRNA precursors and many functional non-coding RNAs using the four ribonucleoside triphosphates as substrates. Pol II is the central component of the basal RNA polymerase II transcription machinery. It is composed of mobile elements that move relative to each other. POLR2D/RPB4 is part of a subcomplex with POLR2G/RPB7 that binds to a pocket formed by POLR2A/RPB1, POLR2B/RPB2 and POLR2F/RPABC2 at the base of the clamp element. The POLR2D/RPB4-POLR2G/RPB7 subcomplex seems to lock the clamp via POLR2G/RPB7 in the closed conformation thus preventing double-stranded DNA to enter the active site cleft. The POLR2D/RPB4-POLR2G/RPB7 subcomplex binds single-stranded DNA and RNA. The polypeptide is DNA-directed RNA polymerase II subunit RPB4 (POLR2D) (Homo sapiens (Human)).